Reading from the N-terminus, the 447-residue chain is Divalent metal cation transporter MntH (447 aa).

11 helical membrane passes run 26 to 48 (AGFWKTLMAYSGPGFLIAVGYMD), 65 to 85 (TLLSVILLSSLIAMLLQAMSA), 108 to 128 (GFLLWIVAELAIMATDIAEII), 140 to 160 (IPLIIGILITAADVLILLLLM), 169 to 189 (AIVATLVAVILIVFAYEVLLS), 212 to 232 (MLYLSLGIVGATVMPHDLYLG), 264 to 284 (LFLAFIVNSLLLILGAALFYG), 304 to 324 (IVGAIASPVLSMLFAVALLAS), 359 to 379 (VLSVAPVLIFAIYYHGDEAKI), 383 to 403 (LTFSQVFLSVALPFAVIPLVI), and 426 to 446 (TATIVLILLNIYLILQTLGLI).

Belongs to the NRAMP family.

It localises to the cell membrane. Its function is as follows. H(+)-stimulated, divalent metal cation uptake system. The sequence is that of Divalent metal cation transporter MntH from Pediococcus pentosaceus (strain ATCC 25745 / CCUG 21536 / LMG 10740 / 183-1w).